The sequence spans 253 residues: Probable transcriptional regulatory protein Krad_3057 (253 aa).

The protein belongs to the TACO1 family.

The protein localises to the cytoplasm. The sequence is that of Probable transcriptional regulatory protein Krad_3057 from Kineococcus radiotolerans (strain ATCC BAA-149 / DSM 14245 / SRS30216).